The chain runs to 347 residues: Zinc-type alcohol dehydrogenase-like protein C16A3.02c (347 aa).

It belongs to the zinc-containing alcohol dehydrogenase family. Quinone oxidoreductase subfamily.

Its subcellular location is the golgi apparatus. The protein resides in the endoplasmic reticulum. The chain is Zinc-type alcohol dehydrogenase-like protein C16A3.02c from Schizosaccharomyces pombe (strain 972 / ATCC 24843) (Fission yeast).